The sequence spans 148 residues: MKLDVKILDARLHEQLPQYATTGSAGLDLRACVDAPLTIEPGTTHLIPTGMAIHLADPGYAALILPRSGMGHKHGIVLGNLVGLIDSDYQGQLMVSTWNRGSTAFVLNPMERLAQLVIVPVVQAELNIVDDFAESERGAGGFGSTGRH.

Residues 67-69, asparagine 80, 84-86, and methionine 94 contribute to the substrate site; these read RSG and LID.

It belongs to the dUTPase family. Mg(2+) serves as cofactor.

It catalyses the reaction dUTP + H2O = dUMP + diphosphate + H(+). Its pathway is pyrimidine metabolism; dUMP biosynthesis; dUMP from dCTP (dUTP route): step 2/2. Its function is as follows. This enzyme is involved in nucleotide metabolism: it produces dUMP, the immediate precursor of thymidine nucleotides and it decreases the intracellular concentration of dUTP so that uracil cannot be incorporated into DNA. The polypeptide is Deoxyuridine 5'-triphosphate nucleotidohydrolase (Ralstonia pickettii (strain 12J)).